A 247-amino-acid polypeptide reads, in one-letter code: Transmembrane protein 33 (247 aa).

At alanine 2 the chain carries N-acetylalanine. Residues 2–31 (ADTTPNGPQGAGAVQFMMTNKLDTAMWLSR) are Lumenal-facing. A helical membrane pass occupies residues 32–52 (LFTVYCSALFVLPLLGLHEAA). The Cytoplasmic portion of the chain corresponds to 53–100 (SFYQRALLANALTSALRLHQRLPHFQLSRAFLAQALLEDSCHYLLYSL). The chain crosses the membrane as a helical span at residues 101-121 (IFVNSYPVTMSIFPVLLFSLL). Over 122-155 (HAATYTKKVLDAKGSNSLPLLRSFLDKLSTNQQN) the chain is Lumenal. A helical transmembrane segment spans residues 156 to 176 (ILKFIACNEIFLMPATVFMLF). Over 177 to 247 (SGQGSLLQPF…FISRLAPTVA (71 aa)) the chain is Cytoplasmic.

Belongs to the PER33/POM33 family. As to quaternary structure, interacts with EIF2AK3. Interacts with RTN1, RTN2, RTN3, RTN4 and ARL6IP1. Interacts with RNF5. Interacts with RNF26. Interacts with PKD2.

The protein localises to the endoplasmic reticulum membrane. The protein resides in the melanosome. It is found in the nucleus envelope. In terms of biological role, acts as a regulator of the tubular endoplasmic reticulum (ER) network by modulating intracellular calcium homeostasis. Mechanistically, stimulates PKD2 calcium-dependent activity. Suppresses the RTN3/4-induced formation of the ER tubules. Positively regulates PERK-mediated and IRE1-mediated unfolded protein response signaling. Plays an essential role in VEGF-mediated release of Ca(2+) from ER stores during angiogenesis. Also plays a role in the modulation of innate immune signaling through the cGAS-STING pathway by interacting with RNF26. Participates in lipid metabolism by acting as a downstream effector of the pyruvate kinase/PKM. Forms a complex with RNF5 to facilitate polyubiquitination and subsequent degradation of SCAP on the ER membrane. The chain is Transmembrane protein 33 (Tmem33) from Mus musculus (Mouse).